Reading from the N-terminus, the 521-residue chain is Na(+)/H(+) antiporter ApNhaP (521 aa).

The Periplasmic segment spans residues 1-18 (MTIEAAMGEEAIKENLEQ). A helical transmembrane segment spans residues 19 to 39 (FLIVLSVSLGVATLSQISSFF). At 40 to 41 (RQ) the chain is on the cytoplasmic side. The helical transmembrane segment at 42 to 62 (IPYTLLLVIVGLGLAFVDIRL) threads the bilayer. The Periplasmic portion of the chain corresponds to 63–94 (VNLSPELILEIFLPPLLFEAAWNIRWRNLKKN). Residues 95-115 (LFPVVLLAIIGVVISVVGIGF) traverse the membrane as a helical segment. Over 116 to 126 (SLNYFSGLSLP) the chain is Cytoplasmic. A helical membrane pass occupies residues 127 to 147 (IALLVGAILAATDPVSVIALF). Topologically, residues 148–164 (RELGVGERLTVLMEGES) are periplasmic. The chain crosses the membrane as a helical span at residues 165-185 (LFNDGVAVVAFSLLVGIPLGT). The Cytoplasmic segment spans residues 186 to 194 (QEFSVTNTL). The helical transmembrane segment at 195-215 (IQFVTLQGIGIGCGGVIGFGI) threads the bilayer. The Periplasmic portion of the chain corresponds to 216-245 (SYLTQRFDLPLVEQSLTLVSAYGTYLITEE). A helical transmembrane segment spans residues 246–266 (LGGSGVIGVVTVGLILGNFGS). Topologically, residues 267–276 (RIGMNPRTRL) are cytoplasmic. A helical transmembrane segment spans residues 277 to 297 (LVSEFWEFIAFFVNSIVFLLI). Residues 298-311 (GDQINIRGLADNGQ) lie on the Periplasmic side of the membrane. A helical transmembrane segment spans residues 312–332 (LILITIIALVIIRAISIYGLG). The Cytoplasmic segment spans residues 333 to 349 (TISNLITKQDISWQEET). A helical transmembrane segment spans residues 350–370 (VLWWGGLRGSVSIALALSVPV). Topologically, residues 371–380 (MLDGRQDIIE) are periplasmic. The chain crosses the membrane as a helical span at residues 381–401 (AVFGVVLFTLLVQGLTMQTVI). The Cytoplasmic portion of the chain corresponds to 402-521 (EKLGLIGDRA…LLQEVLAKPE (120 aa)).

It belongs to the monovalent cation:proton antiporter 1 (CPA1) transporter (TC 2.A.36) family.

It is found in the cell inner membrane. In terms of biological role, na(+)/H(+) antiporter that extrudes sodium in exchange for external protons. Also shows high Ca(2+)/H(+) antiporter activity at alkaline pH. Does not catalyze exchange between Li(+) and H(+). The sequence is that of Na(+)/H(+) antiporter ApNhaP (apnhaP) from Aphanothece halophytica.